The chain runs to 218 residues: 3-isopropylmalate dehydratase small subunit (218 aa).

This sequence belongs to the LeuD family. LeuD type 1 subfamily. Heterodimer of LeuC and LeuD.

It carries out the reaction (2R,3S)-3-isopropylmalate = (2S)-2-isopropylmalate. The protein operates within amino-acid biosynthesis; L-leucine biosynthesis; L-leucine from 3-methyl-2-oxobutanoate: step 2/4. In terms of biological role, catalyzes the isomerization between 2-isopropylmalate and 3-isopropylmalate, via the formation of 2-isopropylmaleate. This chain is 3-isopropylmalate dehydratase small subunit, found in Alkalilimnicola ehrlichii (strain ATCC BAA-1101 / DSM 17681 / MLHE-1).